The sequence spans 616 residues: E3 ubiquitin-protein ligase DTX4 (616 aa).

WWE domains follow at residues 1 to 78 (MLLA…PVRR) and 79 to 155 (NYYD…RVRR). Disordered regions lie at residues 223–254 (VGKL…PSQV) and 355–387 (PPPV…GKTP). Residues 375-384 (KTTKKQAKKG) are compositionally biased toward basic residues. An RING-type; atypical zinc finger spans residues 406-465 (CTICMERLTAPSGYKGPQPTVKPDLVGKLSRCGHIYHIYCLVAMYNNGNKDGSLQCPTCK).

The protein belongs to the Deltex family. As to quaternary structure, interacts with NLRP4. As to expression, expressed in brain, testis, embryonic fibroblasts and thymocytes.

Its subcellular location is the cytoplasm. It carries out the reaction S-ubiquitinyl-[E2 ubiquitin-conjugating enzyme]-L-cysteine + [acceptor protein]-L-lysine = [E2 ubiquitin-conjugating enzyme]-L-cysteine + N(6)-ubiquitinyl-[acceptor protein]-L-lysine.. Its pathway is protein modification; protein ubiquitination. In terms of biological role, functions as a ubiquitin ligase protein in vivo, mediating 'Lys48'-linked polyubiquitination and promoting degradation of TBK1, targeting to TBK1 requires interaction with NLRP4. Regulator of Notch signaling, a signaling pathway involved in cell-cell communications that regulates a broad spectrum of cell-fate determinations. The sequence is that of E3 ubiquitin-protein ligase DTX4 (Dtx4) from Mus musculus (Mouse).